The sequence spans 520 residues: Protein OS-9 homolog (520 aa).

An N-terminal signal peptide occupies residues 1–23; that stretch reads MIRRIRTLTPLLVLACAGSGAWA. The span at 121-135 shows a compositional bias: polar residues; that stretch reads QVDNGNRDQTNGAES. Residues 121 to 144 are disordered; the sequence is QVDNGNRDQTNGAESTSKEDEQRE. The MRH domain maps to 161–302; that stretch reads GKCMYYISGW…VIYTPRLCND (142 aa). Residues C163 and C176 are joined by a disulfide bond. A mannooligosaccharide derivative contacts are provided by W170, W171, Q183, D257, R263, E284, and Y290. 2 disulfide bridges follow: C256–C288 and C271–C300. Positions 442–520 are disordered; the sequence is GLVGTVDSND…SEEIFFKDEL (79 aa). Positions 461-471 are enriched in polar residues; sequence GSISQPAQGTT. Basic and acidic residues predominate over residues 473-499; sequence DKGESNAETGEEKKKADEKIDHYEPEK. The Prevents secretion from ER signature appears at 517–520; the sequence is KDEL.

The protein belongs to the OS-9 family. Interacts with missfolded ER lumenal proteins.

It localises to the endoplasmic reticulum membrane. Its function is as follows. Lectin involved in the quality control of the secretory pathway. As a member of the endoplasmic reticulum-associated degradation lumenal (ERAD-L) surveillance system, targets misfolded endoplasmic reticulum lumenal glycoproteins for degradation. This chain is Protein OS-9 homolog (yos9), found in Aspergillus fumigatus (strain ATCC MYA-4609 / CBS 101355 / FGSC A1100 / Af293) (Neosartorya fumigata).